The sequence spans 684 residues: Glycine--tRNA ligase beta subunit (684 aa).

It belongs to the class-II aminoacyl-tRNA synthetase family. In terms of assembly, tetramer of two alpha and two beta subunits.

The protein resides in the cytoplasm. It catalyses the reaction tRNA(Gly) + glycine + ATP = glycyl-tRNA(Gly) + AMP + diphosphate. This is Glycine--tRNA ligase beta subunit from Pseudomonas syringae pv. syringae (strain B728a).